The sequence spans 835 residues: Beta-galactosidase (835 aa).

Positions 1-22 (MGFWMAMLLMLLLCLWVSCGIA) are cleaved as a signal peptide. Catalysis depends on Glu180, which acts as the Proton donor. The active-site Nucleophile is Glu249. One can recognise an SUEL-type lectin domain in the interval 749–835 (RPLRPKAHLK…KKLSVEAICS (87 aa)).

It belongs to the glycosyl hydrolase 35 family.

The catalysed reaction is Hydrolysis of terminal non-reducing beta-D-galactose residues in beta-D-galactosides.. Involved in cell wall degradation. Degrades polysaccharides containing beta-(1--&gt;4)-linked galactans, acting as an exo-(1--&gt;4)-beta-D-galactanase. The polypeptide is Beta-galactosidase (Solanum lycopersicum (Tomato)).